The primary structure comprises 429 residues: Enolase (429 aa).

Q162 is a binding site for (2R)-2-phosphoglycerate. E204 functions as the Proton donor in the catalytic mechanism. D241, E283, and D310 together coordinate Mg(2+). (2R)-2-phosphoglycerate contacts are provided by K335, R364, S365, and K386. K335 (proton acceptor) is an active-site residue.

The protein belongs to the enolase family. Mg(2+) serves as cofactor.

It localises to the cytoplasm. The protein resides in the secreted. It is found in the cell surface. It carries out the reaction (2R)-2-phosphoglycerate = phosphoenolpyruvate + H2O. It participates in carbohydrate degradation; glycolysis; pyruvate from D-glyceraldehyde 3-phosphate: step 4/5. Its function is as follows. Catalyzes the reversible conversion of 2-phosphoglycerate (2-PG) into phosphoenolpyruvate (PEP). It is essential for the degradation of carbohydrates via glycolysis. In Mycolicibacterium gilvum (strain PYR-GCK) (Mycobacterium gilvum (strain PYR-GCK)), this protein is Enolase.